Reading from the N-terminus, the 239-residue chain is Putative CCR4-associated factor 1 homolog 8 (239 aa).

The a divalent metal cation site is built by Asp-17, Glu-19, Asp-133, and Asn-204.

It belongs to the CAF1 family. In terms of assembly, component of the CCR4-NOT complex, at least composed of CRR4 and CAF1 proteins. It depends on a divalent metal cation as a cofactor.

The protein resides in the nucleus. Its subcellular location is the cytoplasm. The enzyme catalyses Exonucleolytic cleavage of poly(A) to 5'-AMP.. Functionally, ubiquitous transcription factor required for a diverse set of processes. It is a component of the CCR4 complex involved in the control of gene expression. The sequence is that of Putative CCR4-associated factor 1 homolog 8 (CAF1-8) from Arabidopsis thaliana (Mouse-ear cress).